The sequence spans 176 residues: Cytochrome b (176 aa).

The next 3 membrane-spanning stretches (helical) occupy residues 33 to 53, 77 to 98, and 113 to 133; these read FGSL…FLAM, WMLR…YLHV, and WNVG…GYVL. H83 and H97 together coordinate heme b.

Belongs to the cytochrome b family. In terms of assembly, the cytochrome bc1 complex contains 11 subunits: 3 respiratory subunits (MT-CYB, CYC1 and UQCRFS1), 2 core proteins (UQCRC1 and UQCRC2) and 6 low-molecular weight proteins (UQCRH/QCR6, UQCRB/QCR7, UQCRQ/QCR8, UQCR10/QCR9, UQCR11/QCR10 and a cleavage product of UQCRFS1). This cytochrome bc1 complex then forms a dimer. Heme b serves as cofactor.

The protein localises to the mitochondrion inner membrane. Its function is as follows. Component of the ubiquinol-cytochrome c reductase complex (complex III or cytochrome b-c1 complex) that is part of the mitochondrial respiratory chain. The b-c1 complex mediates electron transfer from ubiquinol to cytochrome c. Contributes to the generation of a proton gradient across the mitochondrial membrane that is then used for ATP synthesis. The protein is Cytochrome b (MT-CYB) of Idionycteris phyllotis (Allen's big-eared bat).